A 200-amino-acid polypeptide reads, in one-letter code: Dephospho-CoA kinase (200 aa).

Residues Val4–Asp200 form the DPCK domain. Ala12–Thr17 is an ATP binding site.

This sequence belongs to the CoaE family.

The protein localises to the cytoplasm. The enzyme catalyses 3'-dephospho-CoA + ATP = ADP + CoA + H(+). The protein operates within cofactor biosynthesis; coenzyme A biosynthesis; CoA from (R)-pantothenate: step 5/5. Functionally, catalyzes the phosphorylation of the 3'-hydroxyl group of dephosphocoenzyme A to form coenzyme A. The polypeptide is Dephospho-CoA kinase (Bacillus cereus (strain ATCC 14579 / DSM 31 / CCUG 7414 / JCM 2152 / NBRC 15305 / NCIMB 9373 / NCTC 2599 / NRRL B-3711)).